We begin with the raw amino-acid sequence, 194 residues long: Cytochrome b-245 light chain (194 aa).

Residues 2-7 (GQIEWA) lie on the Cytoplasmic side of the membrane. The helical transmembrane segment at 8-30 (MWANEQALASGLILVAGGIVATA) threads the bilayer. The Extracellular segment spans residues 31 to 35 (GRFTQ). The helical transmembrane segment at 36–53 (WYFGTYAIAAGVLVCLLE) threads the bilayer. The Cytoplasmic portion of the chain corresponds to 54-69 (YPRGSRAKGSTLERCG). Residues 70–80 (QRYLTAVLKLL) lie within the membrane without spanning it. Residues 81–86 (GPLSRN) are Cytoplasmic-facing. A helical transmembrane segment spans residues 87 to 104 (YYFRAALHLALSVPAGFL). Position 105 (L105) is a topological domain, extracellular. A helical transmembrane segment spans residues 106–126 (ATILGTVCLVIASIIYLLAAV). Residues 127–194 (RGEQWTPIEP…NPIPVTDEVV (68 aa)) are Cytoplasmic-facing. Residues 134 to 194 (IEPRPKERPQ…NPIPVTDEVV (61 aa)) are disordered. The residue at position 147 (T147) is a Phosphothreonine. Residue K149 forms a Glycyl lysine isopeptide (Lys-Gly) (interchain with G-Cter in ubiquitin) linkage.

Belongs to the p22phox family. In terms of assembly, component of the phagocyte NADPH oxidase core complex/cytochrome b558 complex, composed of CYBB (heavy chain (beta)) and CYBA (light chain (alpha)). Component of the phagocyte NADPH oxidase complex composed of an obligatory core heterodimer formed by the membrane proteins CYBA and CYBB and the cytosolic regulatory subunits NCF1/p47-phox, NCF2/p67-phox, NCF4/p40-phox and the small GTPase RAC1 or RAC2. Interacts with NCF1 (via SH3 domain). Interacts with SH3PXD2A. Interacts with DUOX1, DUOX2 and TPO. Interacts with NOX4; this interaction mediates superoxide generation. Interacts with calprotectin (S100A8/9). Interacts with GBP7. Interacts with NOXO1. Forms a heterodimer with NOX3 and is essential for activity and cell membrane localization of NOX3. Interacts with NOX1. Post-translationally, phosphorylation at Thr-147 enhances NADPH oxidase activity by promoting NCF1/p47-phox binding. Ubiquitinated at Lys-149 likely by RNF145.

Its subcellular location is the cell membrane. In terms of biological role, subunit of NADPH oxidase complexes that is required for the NADPH oxidase activity that generates, in various cell types, superoxide from molecular oxygen utilizing NADPH as an electron donor. Subunit of the phagocyte NADPH oxidase complex that mediates the transfer of electrons from cytosolic NADPH to O2 to produce the superoxide anion (O2(-)). In the activated complex, electrons are first transferred from NADPH to flavin adenine dinucleotide (FAD) and subsequently transferred via two heme molecules to molecular oxygen, producing superoxide through an outer-sphere reaction. Activation of the NADPH oxidase complex is initiated by the assembly of cytosolic subunits of the NADPH oxidase complex with the core NADPH oxidase complex to form a complex at the plasma membrane or phagosomal membrane. This activation process is initiated by phosphorylation dependent binding of the cytosolic NCF1/p47-phox subunit to the C-terminus of CYBA/p22-phox. Aassociates with NOX3 to form a functional NADPH oxidase constitutively generating superoxide. This Oryctolagus cuniculus (Rabbit) protein is Cytochrome b-245 light chain.